The chain runs to 480 residues: Endothelial transcription factor GATA-2 (480 aa).

Ser-73 is subject to Phosphoserine. Arg-86 is subject to Asymmetric dimethylarginine. Residues 166–208 form a disordered region; it reads SGSHLFGFPPTPPKEVSPDPSTTGAASPASPSAGGSVARGEDK. Low complexity predominate over residues 183–201; the sequence is PDPSTTGAASPASPSAGGS. Ser-192 carries the post-translational modification Phosphoserine. 2 GATA-type zinc fingers span residues 295–319 and 349–373; these read CVNC…CNAC and CANC…CNAC. Residue Lys-389 forms a Glycyl lysine isopeptide (Lys-Gly) (interchain with G-Cter in SUMO2) linkage. The interval 457–480 is disordered; sequence TPIHPSSSLSFGHPHPSSMVTAMG.

As to quaternary structure, interacts with BRD3. Interacts with AR and CCAR1. Interacts with MDFIC.

The protein localises to the nucleus. In terms of biological role, transcriptional activator which regulates endothelin-1 gene expression in endothelial cells. Binds to the consensus sequence 5'-AGATAG-3'. Plays an important role in the regulation of phagocytosis in alveolar macrophages, particularly during P.carinii infection. This chain is Endothelial transcription factor GATA-2, found in Rattus norvegicus (Rat).